The chain runs to 166 residues: Signal peptidase complex catalytic subunit SEC11 (166 aa).

At 1-9 (MNIRQQITQ) the chain is on the cytoplasmic side. The chain crosses the membrane as a helical; Signal-anchor for type II membrane protein span at residues 10 to 30 (FLSLAYVFSSAFMLWKTLSVI). The Lumenal segment spans residues 31 to 166 (ANSHSPIVVV…LGLSSLFSNE (136 aa)). Active-site charge relay system residues include Ser-44, His-83, and Asp-108. Residues 152 to 163 (GMLGLLGLSSLF) are C-terminal short (CTS) helix.

Belongs to the peptidase S26B family. In terms of assembly, component of the signal peptidase complex (SPC) composed of a catalytic subunit SEC11 and three accessory subunits SPC1, SPC2 and SPC3. The complex induces a local thinning of the ER membrane which is used to measure the length of the signal peptide (SP) h-region of protein substrates. This ensures the selectivity of the complex towards h-regions shorter than 18-20 amino acids. SPC associates with the translocon complex.

The protein localises to the endoplasmic reticulum membrane. The enzyme catalyses Cleavage of hydrophobic, N-terminal signal or leader sequences from secreted and periplasmic proteins.. Its function is as follows. Catalytic component of the signal peptidase complex (SPC) which catalyzes the cleavage of N-terminal signal sequences from nascent proteins as they are translocated into the lumen of the endoplasmic reticulum. Specifically cleaves N-terminal signal peptides that contain a hydrophobic alpha-helix (h-region) shorter than 18-20 amino acids. The protein is Signal peptidase complex catalytic subunit SEC11 (SEC11) of Candida dubliniensis (strain CD36 / ATCC MYA-646 / CBS 7987 / NCPF 3949 / NRRL Y-17841) (Yeast).